Reading from the N-terminus, the 502-residue chain is 9-beta-pimara-7,15-diene oxidase (502 aa).

A run of 2 helical transmembrane segments spans residues 4–26 (INSE…ALLT) and 106–128 (LLVS…GAYW). Position 438 (C438) interacts with heme.

This sequence belongs to the cytochrome P450 family. Heme is required as a cofactor.

The protein localises to the membrane. The enzyme catalyses 9beta-pimara-7,15-diene + 3 reduced [NADPH--hemoprotein reductase] + 3 O2 = 9beta-pimara-7,15-dien-19-oate + 3 oxidized [NADPH--hemoprotein reductase] + 4 H2O + 4 H(+). In terms of biological role, involved in momilactone phytoalexins biosynthesis; acts as a multifunctional diterpene oxidase. Participates in the biosynthetic steps between 9-beta-pimara-7,15-diene and 3-beta-hydroxy-9-beta-pimara-7,15-dien-19,6-beta-olide. Also catalyzes consecutive oxidations at C19 of syn-stemod-13(17)-ene. This chain is 9-beta-pimara-7,15-diene oxidase (CYP99A3), found in Oryza sativa subsp. japonica (Rice).